A 136-amino-acid polypeptide reads, in one-letter code: NADPH-dependent 7-cyano-7-deazaguanine reductase (136 aa).

Catalysis depends on Cys50, which acts as the Thioimide intermediate. The Proton donor role is filled by Asp57. Substrate-binding positions include 72–74 (YEL) and 91–92 (HE).

This sequence belongs to the GTP cyclohydrolase I family. QueF type 1 subfamily.

It localises to the cytoplasm. It catalyses the reaction 7-aminomethyl-7-carbaguanine + 2 NADP(+) = 7-cyano-7-deazaguanine + 2 NADPH + 3 H(+). It participates in tRNA modification; tRNA-queuosine biosynthesis. In terms of biological role, catalyzes the NADPH-dependent reduction of 7-cyano-7-deazaguanine (preQ0) to 7-aminomethyl-7-deazaguanine (preQ1). In Prochlorococcus marinus (strain AS9601), this protein is NADPH-dependent 7-cyano-7-deazaguanine reductase.